The primary structure comprises 381 residues: Chaperone protein DnaJ (381 aa).

Residues 5-69 (DYYEVLGVSK…EKRARYDRFG (65 aa)) enclose the J domain. The CR-type zinc finger occupies 136–218 (GKETEIEVPH…CGGTGHVKKR (83 aa)). Zn(2+)-binding residues include cysteine 149, cysteine 152, cysteine 166, cysteine 169, cysteine 192, cysteine 195, cysteine 206, and cysteine 209. 4 CXXCXGXG motif repeats span residues 149 to 156 (CDTCHGSG), 166 to 173 (CPHCHGSG), 192 to 199 (CPVCGGTG), and 206 to 213 (CPTCGGTG). The interval 154-174 (GSGAKPGTSPQSCPHCHGSGQ) is disordered.

It belongs to the DnaJ family. As to quaternary structure, homodimer. It depends on Zn(2+) as a cofactor.

Its subcellular location is the cytoplasm. Functionally, participates actively in the response to hyperosmotic and heat shock by preventing the aggregation of stress-denatured proteins and by disaggregating proteins, also in an autonomous, DnaK-independent fashion. Unfolded proteins bind initially to DnaJ; upon interaction with the DnaJ-bound protein, DnaK hydrolyzes its bound ATP, resulting in the formation of a stable complex. GrpE releases ADP from DnaK; ATP binding to DnaK triggers the release of the substrate protein, thus completing the reaction cycle. Several rounds of ATP-dependent interactions between DnaJ, DnaK and GrpE are required for fully efficient folding. Also involved, together with DnaK and GrpE, in the DNA replication of plasmids through activation of initiation proteins. The chain is Chaperone protein DnaJ from Geobacillus thermodenitrificans (strain NG80-2).